The sequence spans 98 residues: ESAT-6-like protein EsxM (98 aa).

It belongs to the WXG100 family. CFP-10 subfamily.

It is found in the secreted. Alters the host macrophage cytoskeleton and enhances macrophage motility. Promotes granuloma efflux, extrapulmonary dissemination of infection and bone disease. This is ESAT-6-like protein EsxM from Mycobacterium marinum (strain ATCC BAA-535 / M).